Here is a 379-residue protein sequence, read N- to C-terminus: Putative acetyl-CoA C-acetyltransferase VraB (379 aa).

C86 (acyl-thioester intermediate) is an active-site residue. H338 serves as the catalytic Proton acceptor.

It belongs to the thiolase-like superfamily. Thiolase family.

This chain is Putative acetyl-CoA C-acetyltransferase VraB (vraB), found in Staphylococcus aureus (strain MSSA476).